The sequence spans 206 residues: Ribosomal RNA small subunit methyltransferase G (206 aa).

Residues G74, L79, 125-126 (VE), and R140 each bind S-adenosyl-L-methionine.

This sequence belongs to the methyltransferase superfamily. RNA methyltransferase RsmG family.

It localises to the cytoplasm. It carries out the reaction guanosine(527) in 16S rRNA + S-adenosyl-L-methionine = N(7)-methylguanosine(527) in 16S rRNA + S-adenosyl-L-homocysteine. In terms of biological role, specifically methylates the N7 position of guanine in position 527 of 16S rRNA. The polypeptide is Ribosomal RNA small subunit methyltransferase G (Shewanella woodyi (strain ATCC 51908 / MS32)).